The following is a 217-amino-acid chain: Adenylate kinase (217 aa).

An ATP-binding site is contributed by 10-15; that stretch reads GIGKGT. The segment at 30 to 59 is NMP; that stretch reads ATGDIFRKNFKENTELGILIKKIIAQGLLV. Residues T31, R36, 57 to 59, 85 to 88, and Q92 contribute to the AMP site; these read LLV and GFPR. The tract at residues 126 to 163 is LID; it reads GRRICPECGKVYHIENIPPKTPGICDKDQKTLIQREDD. R127 provides a ligand contact to ATP. Residues C130 and C133 each contribute to the Zn(2+) site. Residue 136 to 137 coordinates ATP; the sequence is VY. Residues C150 and D153 each contribute to the Zn(2+) site. Residues R160 and R171 each contribute to the AMP site. Q199 contacts ATP.

This sequence belongs to the adenylate kinase family. In terms of assembly, monomer.

The protein localises to the cytoplasm. The catalysed reaction is AMP + ATP = 2 ADP. The protein operates within purine metabolism; AMP biosynthesis via salvage pathway; AMP from ADP: step 1/1. Its function is as follows. Catalyzes the reversible transfer of the terminal phosphate group between ATP and AMP. Plays an important role in cellular energy homeostasis and in adenine nucleotide metabolism. This is Adenylate kinase from Onion yellows phytoplasma (strain OY-M).